Here is a 318-residue protein sequence, read N- to C-terminus: NADH-ubiquinone oxidoreductase chain 1 (318 aa).

The next 8 membrane-spanning stretches (helical) occupy residues 2–22 (PMIN…FLML), 76–96 (ALAL…IPLI), 100–120 (LGLL…LWSG), 146–166 (LALI…SALI), 171–191 (HSWL…STLA), 222–242 (LFFM…TMIF), 253–273 (ELYT…FLWI), and 294–314 (LPLT…TSGI).

It belongs to the complex I subunit 1 family. Core subunit of respiratory chain NADH dehydrogenase (Complex I) which is composed of 45 different subunits.

Its subcellular location is the mitochondrion inner membrane. The catalysed reaction is a ubiquinone + NADH + 5 H(+)(in) = a ubiquinol + NAD(+) + 4 H(+)(out). Its function is as follows. Core subunit of the mitochondrial membrane respiratory chain NADH dehydrogenase (Complex I) which catalyzes electron transfer from NADH through the respiratory chain, using ubiquinone as an electron acceptor. Essential for the catalytic activity and assembly of complex I. The polypeptide is NADH-ubiquinone oxidoreductase chain 1 (MT-ND1) (Pongo abelii (Sumatran orangutan)).